The sequence spans 920 residues: Disintegrin and metalloproteinase domain-containing protein 19 (920 aa).

The signal sequence occupies residues 1-26; it reads MPGRAGVARFCLLALALQLHWPLAAC. Positions 27-204 are excised as a propeptide; the sequence is EPGWTTRGSQ…TKKQPRRMKR (178 aa). At 27–703 the chain is on the extracellular side; it reads EPGWTTRGSQ…VDSGPLPPKS (677 aa). The Cysteine switch signature appears at 131–138; the sequence is STCRGIRG. Cys133 serves as a coordination point for Zn(2+). An N-linked (GlcNAc...) asparagine glycan is attached at Asn145. The 199-residue stretch at 211–409 folds into the Peptidase M12B domain; it reads KYVELYLVAD…GGGMCLSNMP (199 aa). 3 cysteine pairs are disulfide-bonded: Cys321–Cys404, Cys361–Cys388, and Cys362–Cys371. Residue His346 participates in Zn(2+) binding. The active site involves Glu347. Zn(2+)-binding residues include His350 and His356. The Disintegrin domain maps to 417 to 503; it reads GRRCGNGYLE…HCPTNYYQMD (87 aa). Asn445 and Asn448 each carry an N-linked (GlcNAc...) asparagine glycan. Cysteines 475 and 495 form a disulfide. An N-linked (GlcNAc...) asparagine glycan is attached at Asn649. The 33-residue stretch at 654-686 folds into the EGF-like domain; that stretch reads ETEGCGKKCNGHGVCNNNKNCHCFPGWSPPFCN. 3 cysteine pairs are disulfide-bonded: Cys658-Cys668, Cys662-Cys674, and Cys676-Cys685. Residues 704–724 form a helical membrane-spanning segment; sequence VGPVIAGVFSALFVLAVLVLL. Residues 725 to 920 lie on the Cytoplasmic side of the membrane; sequence CHCYRQSHKL…RVGAIISSKI (196 aa). Residues 755 to 920 are disordered; that stretch reads SQSGGTGHAN…RVGAIISSKI (166 aa). A compositionally biased stretch (polar residues) spans 767–783; sequence FKLQTPQGKRKVTNTPE. Basic and acidic residues predominate over residues 825-834; it reads ARIERKESAR. The short motif at 835-846 is the SH3-binding element; it reads RPPPSRPMPPAP. 2 stretches are compositionally biased toward pro residues: residues 835–846 and 888–903; these read RPPPSRPMPPAP and TSGP…PVPK.

As to quaternary structure, interacts with SH3PXD2A. Zn(2+) serves as cofactor. In terms of processing, the precursor is cleaved by a furin endopeptidase. In terms of tissue distribution, widely expressed, with the highest expression in bone, heart and lung, followed by brain and spleen and relatively low expression in liver, skeletal muscle, kidney and testis. In bone, primarily expressed in cell of the osteoblast lineage and not detected in mature osteoclasts.

Its subcellular location is the membrane. In terms of biological role, participates in the proteolytic processing of beta-type neuregulin isoforms which are involved in neurogenesis and synaptogenesis, suggesting a regulatory role in glial cell. Also cleaves alpha-2 macroglobulin. May be involved in osteoblast differentiation and/or osteoblast activity in bone. This chain is Disintegrin and metalloproteinase domain-containing protein 19 (Adam19), found in Mus musculus (Mouse).